A 294-amino-acid chain; its full sequence is MDAKQTRQGVLLALAAYFIWGIAPAYFKLIYYVPADEILTHRVIWSFFFMVALLSVSRQWRQVKRLLKTPKKIFLLALSAVLVGGNWLLFIWAVNNHHMLEASLGYFINPLVNILLGMIFLGERFRRMQWLAVILAVCGVLVQLWTFGSLPIIALGLAFSFAFYGLVRKKIAVEAQTGMLVETLWLLPVAAIYLFGIADSPTSHMGQNALSLNLLLMAAGVVTTIPLLCFTGAATRLRLSTLGFFQYIGPTLMFLLAVTFYGEVPGADKMVTFAFIWVALAIFVMDAIYTQRKK.

At 1 to 11 (MDAKQTRQGVL) the chain is on the cytoplasmic side. The helical transmembrane segment at 12–34 (LALAAYFIWGIAPAYFKLIYYVP) threads the bilayer. Positions 18–145 (FIWGIAPAYF…AVCGVLVQLW (128 aa)) constitute an EamA domain. At 35–37 (ADE) the chain is on the periplasmic side. Residues 38–60 (ILTHRVIWSFFFMVALLSVSRQW) form a helical membrane-spanning segment. Residues 61-72 (RQVKRLLKTPKK) lie on the Cytoplasmic side of the membrane. The chain crosses the membrane as a helical span at residues 73 to 95 (IFLLALSAVLVGGNWLLFIWAVN). The Periplasmic segment spans residues 96-99 (NHHM). The chain crosses the membrane as a helical span at residues 100–122 (LEASLGYFINPLVNILLGMIFLG). The Cytoplasmic portion of the chain corresponds to 123-128 (ERFRRM). The chain crosses the membrane as a helical span at residues 129–146 (QWLAVILAVCGVLVQLWT). Residues 147 to 149 (FGS) lie on the Periplasmic side of the membrane. The helical transmembrane segment at 150–167 (LPIIALGLAFSFAFYGLV) threads the bilayer. Topologically, residues 168-179 (RKKIAVEAQTGM) are cytoplasmic. The chain crosses the membrane as a helical span at residues 180–197 (LVETLWLLPVAAIYLFGI). At 198 to 211 (ADSPTSHMGQNALS) the chain is on the periplasmic side. The chain crosses the membrane as a helical span at residues 212-234 (LNLLLMAAGVVTTIPLLCFTGAA). The Cytoplasmic portion of the chain corresponds to 235 to 238 (TRLR). A helical transmembrane segment spans residues 239 to 261 (LSTLGFFQYIGPTLMFLLAVTFY). Residues 262 to 270 (GEVPGADKM) lie on the Periplasmic side of the membrane. The helical transmembrane segment at 271–290 (VTFAFIWVALAIFVMDAIYT) threads the bilayer. The Cytoplasmic portion of the chain corresponds to 291 to 294 (QRKK).

This sequence belongs to the EamA transporter family.

The protein localises to the cell inner membrane. In Salmonella typhimurium (strain LT2 / SGSC1412 / ATCC 700720), this protein is Protein RarD (rarD).